We begin with the raw amino-acid sequence, 476 residues long: Glutamate--tRNA ligase (476 aa).

Residues 9–19 (PSPTGTLHIGT) carry the 'HIGH' region motif. A 'KMSKS' region motif is present at residues 248–252 (KLSKR). Lys-251 contacts ATP.

Belongs to the class-I aminoacyl-tRNA synthetase family. Glutamate--tRNA ligase type 1 subfamily. Monomer.

The protein localises to the cytoplasm. It carries out the reaction tRNA(Glu) + L-glutamate + ATP = L-glutamyl-tRNA(Glu) + AMP + diphosphate. Catalyzes the attachment of glutamate to tRNA(Glu) in a two-step reaction: glutamate is first activated by ATP to form Glu-AMP and then transferred to the acceptor end of tRNA(Glu). This chain is Glutamate--tRNA ligase, found in Prochlorococcus marinus (strain MIT 9313).